The primary structure comprises 485 residues: Protein nucleotidyltransferase YdiU (485 aa).

ATP-binding residues include glycine 85, glycine 87, arginine 88, lysine 108, aspartate 120, glycine 121, arginine 171, and arginine 178. Aspartate 249 acts as the Proton acceptor in catalysis. Asparagine 250 and aspartate 259 together coordinate Mg(2+). ATP is bound at residue aspartate 259. Residues 462 to 485 are disordered; sequence LPTTPNYQDPPADGDRSYQTFCGT.

The protein belongs to the SELO family. Mg(2+) is required as a cofactor. Mn(2+) serves as cofactor.

The enzyme catalyses L-seryl-[protein] + ATP = 3-O-(5'-adenylyl)-L-seryl-[protein] + diphosphate. The catalysed reaction is L-threonyl-[protein] + ATP = 3-O-(5'-adenylyl)-L-threonyl-[protein] + diphosphate. It carries out the reaction L-tyrosyl-[protein] + ATP = O-(5'-adenylyl)-L-tyrosyl-[protein] + diphosphate. It catalyses the reaction L-histidyl-[protein] + UTP = N(tele)-(5'-uridylyl)-L-histidyl-[protein] + diphosphate. The enzyme catalyses L-seryl-[protein] + UTP = O-(5'-uridylyl)-L-seryl-[protein] + diphosphate. The catalysed reaction is L-tyrosyl-[protein] + UTP = O-(5'-uridylyl)-L-tyrosyl-[protein] + diphosphate. Functionally, nucleotidyltransferase involved in the post-translational modification of proteins. It can catalyze the addition of adenosine monophosphate (AMP) or uridine monophosphate (UMP) to a protein, resulting in modifications known as AMPylation and UMPylation. The chain is Protein nucleotidyltransferase YdiU from Teredinibacter turnerae (strain ATCC 39867 / T7901).